A 416-amino-acid chain; its full sequence is Transmembrane protease serine 11B-like protein (416 aa).

The Cytoplasmic segment spans residues 1-15; it reads MYRPVIASRKSIPPW. Residues 16–36 form a helical; Signal-anchor for type II membrane protein membrane-spanning segment; the sequence is LIILCVLGVLAALGIIIGLLV. The Extracellular segment spans residues 37–416; that stretch reads HFLAVENKIY…RNWIASKTGI (380 aa). The SEA domain maps to 44-161; sequence KIYYYQGGFK…GSLKLTEISK (118 aa). N107 carries N-linked (GlcNAc...) asparagine glycosylation. The 231-residue stretch at 185–415 folds into the Peptidase S1 domain; it reads ITGGSTAHKG…YRNWIASKTG (231 aa). A disulfide bridge links C210 with C226. H225 (charge relay system) is an active-site residue. N-linked (GlcNAc...) asparagine glycosylation is present at N235. Residue D270 is the Charge relay system of the active site. Cystine bridges form between C335-C351 and C362-C391. S366 (charge relay system) is an active-site residue.

Belongs to the peptidase S1 family. Expressed in esophagus, cervix, tongue, and testes.

The protein localises to the cell membrane. Its activity is regulated as follows. Inhibited by aprotinin, leupeptin, benzamidine, SERPINA1, SPINT1 and SPINT2. Its function is as follows. Serine protease. The protein is Transmembrane protease serine 11B-like protein (Tmprss11b) of Mus musculus (Mouse).